The primary structure comprises 296 residues: Transmembrane protein 156 (296 aa).

At 1–4 (MTKT) the chain is on the cytoplasmic side. The chain crosses the membrane as a helical span at residues 5–25 (ALLKLFVAIVITFILILPEYF). The Extracellular segment spans residues 26–211 (KTPKERTLEL…EMDIKNITCS (186 aa)). N-linked (GlcNAc...) asparagine glycosylation is found at Asn45 and Asn156. A helical membrane pass occupies residues 212–232 (MKITWYILVLLVFIFLIILTI). Topologically, residues 233–296 (RKILEGQRRV…QEVLPPIPEL (64 aa)) are cytoplasmic.

The protein localises to the membrane. The protein is Transmembrane protein 156 (TMEM156) of Homo sapiens (Human).